Reading from the N-terminus, the 301-residue chain is Sulfate adenylyltransferase subunit 2 (301 aa).

It belongs to the PAPS reductase family. CysD subfamily. Heterodimer composed of CysD, the smaller subunit, and CysN.

The enzyme catalyses sulfate + ATP + H(+) = adenosine 5'-phosphosulfate + diphosphate. The protein operates within sulfur metabolism; hydrogen sulfide biosynthesis; sulfite from sulfate: step 1/3. Its function is as follows. With CysN forms the ATP sulfurylase (ATPS) that catalyzes the adenylation of sulfate producing adenosine 5'-phosphosulfate (APS) and diphosphate, the first enzymatic step in sulfur assimilation pathway. APS synthesis involves the formation of a high-energy phosphoric-sulfuric acid anhydride bond driven by GTP hydrolysis by CysN coupled to ATP hydrolysis by CysD. This is Sulfate adenylyltransferase subunit 2 from Shewanella woodyi (strain ATCC 51908 / MS32).